The sequence spans 194 residues: HTH-type nicotine-responsive transcriptional repressor HdnoR (194 aa).

The 61-residue stretch at 6–66 folds into the HTH tetR-type domain; that stretch reads VDRRQQLIDA…AAAAELLQQL (61 aa). A DNA-binding region (H-T-H motif) is located at residues 29–48; it reads SLRTIASEAKASLAAVHVCF.

As to quaternary structure, homodimer.

With respect to regulation, 6-hydroxy-D-nicotine and 6-hydroxy-L-nicotine prevent HdnoR from binding to the IR1 DNA. Both 6-hydroxy-nicotine enantiomers prevent DNA-protein complex formation at micromolar concentrations, with the D-enantiomer being twice as potent as the L-enantiomer. A thousand-fold higher L-nicotine concentration is required to elicit a similar effect. Functionally, represses expression of the 6-hydroxy-D-nicotine oxidase (6-hdno). Acts by binding to a gene operator site consisting of two inverted repeats, IR1 (covering the 6-hdno promoter region) and IR2 (situated upstream from the 6-hdno promoter). Binding to one site may stimulate binding of the protein to the second site. This chain is HTH-type nicotine-responsive transcriptional repressor HdnoR, found in Paenarthrobacter nicotinovorans (Arthrobacter nicotinovorans).